The following is a 434-amino-acid chain: UDP-N-acetylglucosamine 1-carboxyvinyltransferase 1 (434 aa).

22–23 (KN) is a phosphoenolpyruvate binding site. A UDP-N-acetyl-alpha-D-glucosamine-binding site is contributed by Arg93. Residue Cys117 is the Proton donor of the active site. 2-(S-cysteinyl)pyruvic acid O-phosphothioketal is present on Cys117. UDP-N-acetyl-alpha-D-glucosamine contacts are provided by residues 122-126 (RPIDQ), Asp306, and Val328.

The protein belongs to the EPSP synthase family. MurA subfamily.

The protein localises to the cytoplasm. The catalysed reaction is phosphoenolpyruvate + UDP-N-acetyl-alpha-D-glucosamine = UDP-N-acetyl-3-O-(1-carboxyvinyl)-alpha-D-glucosamine + phosphate. It functions in the pathway cell wall biogenesis; peptidoglycan biosynthesis. Cell wall formation. Adds enolpyruvyl to UDP-N-acetylglucosamine. This is UDP-N-acetylglucosamine 1-carboxyvinyltransferase 1 from Bacillus cereus (strain ATCC 10987 / NRS 248).